Here is a 150-residue protein sequence, read N- to C-terminus: Large ribosomal subunit protein bL9 (150 aa).

The protein belongs to the bacterial ribosomal protein bL9 family.

Functionally, binds to the 23S rRNA. The protein is Large ribosomal subunit protein bL9 of Pediococcus pentosaceus (strain ATCC 25745 / CCUG 21536 / LMG 10740 / 183-1w).